The sequence spans 285 residues: Diaminopimelate epimerase (285 aa).

Residues Asn-15 and Asn-68 each coordinate substrate. The Proton donor role is filled by Cys-77. Residues 78-79 (GN), Asn-165, Asn-201, and 219-220 (ER) contribute to the substrate site. Cys-228 acts as the Proton acceptor in catalysis. 229–230 (GT) lines the substrate pocket.

The protein belongs to the diaminopimelate epimerase family. As to quaternary structure, homodimer.

The protein localises to the cytoplasm. The enzyme catalyses (2S,6S)-2,6-diaminopimelate = meso-2,6-diaminopimelate. Its pathway is amino-acid biosynthesis; L-lysine biosynthesis via DAP pathway; DL-2,6-diaminopimelate from LL-2,6-diaminopimelate: step 1/1. Catalyzes the stereoinversion of LL-2,6-diaminopimelate (L,L-DAP) to meso-diaminopimelate (meso-DAP), a precursor of L-lysine and an essential component of the bacterial peptidoglycan. This is Diaminopimelate epimerase from Synechococcus sp. (strain JA-3-3Ab) (Cyanobacteria bacterium Yellowstone A-Prime).